The primary structure comprises 233 residues: Small ribosomal subunit protein uS3 (233 aa).

The region spanning 39 to 107 is the KH type-2 domain; it reads VRQYLTKELA…PAQINIAEVR (69 aa).

This sequence belongs to the universal ribosomal protein uS3 family. In terms of assembly, part of the 30S ribosomal subunit. Forms a tight complex with proteins S10 and S14.

In terms of biological role, binds the lower part of the 30S subunit head. Binds mRNA in the 70S ribosome, positioning it for translation. This Citrobacter koseri (strain ATCC BAA-895 / CDC 4225-83 / SGSC4696) protein is Small ribosomal subunit protein uS3.